The following is a 101-amino-acid chain: Large ribosomal subunit protein uL23 (101 aa).

It belongs to the universal ribosomal protein uL23 family. As to quaternary structure, part of the 50S ribosomal subunit. Contacts protein L29, and trigger factor when it is bound to the ribosome.

In terms of biological role, one of the early assembly proteins it binds 23S rRNA. One of the proteins that surrounds the polypeptide exit tunnel on the outside of the ribosome. Forms the main docking site for trigger factor binding to the ribosome. This chain is Large ribosomal subunit protein uL23, found in Azoarcus sp. (strain BH72).